A 402-amino-acid chain; its full sequence is Argininosuccinate synthase (402 aa).

ATP is bound by residues 13–21 (AYSGGLDTS) and alanine 40. L-citrulline-binding residues include tyrosine 91 and serine 96. Glycine 121 lines the ATP pocket. Residues threonine 123, asparagine 127, and aspartate 128 each coordinate L-aspartate. Asparagine 127 serves as a coordination point for L-citrulline. 5 residues coordinate L-citrulline: arginine 131, serine 180, serine 189, glutamate 265, and tyrosine 277.

Belongs to the argininosuccinate synthase family. Type 1 subfamily. Homotetramer.

It is found in the cytoplasm. The enzyme catalyses L-citrulline + L-aspartate + ATP = 2-(N(omega)-L-arginino)succinate + AMP + diphosphate + H(+). It functions in the pathway amino-acid biosynthesis; L-arginine biosynthesis; L-arginine from L-ornithine and carbamoyl phosphate: step 2/3. The chain is Argininosuccinate synthase from Leptospira biflexa serovar Patoc (strain Patoc 1 / Ames).